Consider the following 281-residue polypeptide: Large ribosomal subunit protein uL2 (281 aa).

The segment at 224 to 281 (RGSAMNPNDHPHGGGEGHQPIGRKSPMTPWGKKALGVKTRKTKKASNQFIIRRRKESK) is disordered.

Belongs to the universal ribosomal protein uL2 family. Part of the 50S ribosomal subunit. Forms a bridge to the 30S subunit in the 70S ribosome.

Its function is as follows. One of the primary rRNA binding proteins. Required for association of the 30S and 50S subunits to form the 70S ribosome, for tRNA binding and peptide bond formation. It has been suggested to have peptidyltransferase activity; this is somewhat controversial. Makes several contacts with the 16S rRNA in the 70S ribosome. This is Large ribosomal subunit protein uL2 from Metamycoplasma arthritidis (strain 158L3-1) (Mycoplasma arthritidis).